Reading from the N-terminus, the 312-residue chain is Ribosomal RNA small subunit methyltransferase H (312 aa).

S-adenosyl-L-methionine-binding positions include 32-34 (AGH), aspartate 52, phenylalanine 79, aspartate 100, and glutamine 107.

Belongs to the methyltransferase superfamily. RsmH family.

It localises to the cytoplasm. The catalysed reaction is cytidine(1402) in 16S rRNA + S-adenosyl-L-methionine = N(4)-methylcytidine(1402) in 16S rRNA + S-adenosyl-L-homocysteine + H(+). Functionally, specifically methylates the N4 position of cytidine in position 1402 (C1402) of 16S rRNA. In Listeria monocytogenes serovar 1/2a (strain ATCC BAA-679 / EGD-e), this protein is Ribosomal RNA small subunit methyltransferase H.